The sequence spans 571 residues: uncharacterized protein (571 aa).

11 helical membrane-spanning segments follow: residues valine 5–valine 27, threonine 34–threonine 56, isoleucine 61–alanine 79, leucine 92–phenylalanine 114, threonine 161–phenylalanine 183, phenylalanine 391–serine 408, phenylalanine 412–isoleucine 434, leucine 455–threonine 474, phenylalanine 484–leucine 506, valine 513–leucine 532, and serine 547–isoleucine 569.

The protein belongs to the AAE transporter (TC 2.A.81) family.

It localises to the cell membrane. This is an uncharacterized protein from Francisella tularensis subsp. tularensis (strain SCHU S4 / Schu 4).